Consider the following 480-residue polypeptide: Heparin cofactor 2 (480 aa).

Positions 1–19 are cleaved as a signal peptide; that stretch reads MQHRPHLLLISLTIMSVCG. N-linked (GlcNAc...) asparagine glycosylation is present at Asn-32. 2 consecutive repeat copies span residues 56-66 and 70-80. The segment at 56-80 is 2 X 11 AA approximate repeats, Asp/Glu-rich (acidic) (hirudin-like); it reads GEEDDDYLDLEKLLSEDDDYIDIID. A sulfotyrosine mark is found at Tyr-62 and Tyr-75. Asn-169 carries N-linked (GlcNAc...) asparagine glycosylation. The interval 173 to 193 is glycosaminoglycan-binding site; it reads KYEILTIHNLFRKLTHRLFRR. Residues Asn-368 and Asn-404 are each glycosylated (N-linked (GlcNAc...) asparagine).

Belongs to the serpin family. Post-translationally, N-glycosylated; different glycan composition appears to lead to two forms of this protein (56 and 60 kDa).

In terms of biological role, thrombin inhibitor activated by the glycosaminoglycans, heparin or dermatan sulfate. In the presence of the latter, HC-II becomes the predominant thrombin inhibitor in place of antithrombin III (AT). The protein is Heparin cofactor 2 (SERPIND1) of Oryctolagus cuniculus (Rabbit).